Consider the following 125-residue polypeptide: Small ribosomal subunit protein bS6 (125 aa).

The tract at residues 96 to 125 is disordered; the sequence is ETGASSMMKTVEREEARKASQAEFAAANER. Residues 105–115 are compositionally biased toward basic and acidic residues; it reads TVEREEARKAS.

It belongs to the bacterial ribosomal protein bS6 family.

Binds together with bS18 to 16S ribosomal RNA. The polypeptide is Small ribosomal subunit protein bS6 (Paracidovorax citrulli (strain AAC00-1) (Acidovorax citrulli)).